A 128-amino-acid chain; its full sequence is Fluoride-specific ion channel FluC 2 (128 aa).

Helical transmembrane passes span Ala-13–Gly-35, Leu-40–Ala-59, Leu-71–Leu-93, and Trp-97–Ile-119.

Belongs to the fluoride channel Fluc/FEX (TC 1.A.43) family.

The protein resides in the cell membrane. It catalyses the reaction fluoride(in) = fluoride(out). Functionally, fluoride-specific ion channel. Important for reducing fluoride concentration in the cell, thus reducing its toxicity. The protein is Fluoride-specific ion channel FluC 2 of Halobacterium salinarum (strain ATCC 700922 / JCM 11081 / NRC-1) (Halobacterium halobium).